Reading from the N-terminus, the 358-residue chain is Nitric oxide synthase oxygenase (358 aa).

Heme is bound at residue Cys62.

The protein belongs to the NOS family. Bacterial NOS oxygenase subfamily. As to quaternary structure, homodimer. It depends on heme as a cofactor. (6S)-5,6,7,8-tetrahydrofolate serves as cofactor.

The enzyme catalyses 3 reduced [flavodoxin] + 2 L-arginine + 4 O2 = 3 oxidized [flavodoxin] + 2 L-citrulline + 2 nitric oxide + 4 H2O + 5 H(+). Its function is as follows. Catalyzes the production of nitric oxide. The chain is Nitric oxide synthase oxygenase (nos) from Staphylococcus aureus (strain COL).